A 282-amino-acid chain; its full sequence is Bifunctional protein FolD 1 (282 aa).

NADP(+) is bound by residues 167-169 and S192; that span reads GRS.

This sequence belongs to the tetrahydrofolate dehydrogenase/cyclohydrolase family. In terms of assembly, homodimer.

The enzyme catalyses (6R)-5,10-methylene-5,6,7,8-tetrahydrofolate + NADP(+) = (6R)-5,10-methenyltetrahydrofolate + NADPH. It carries out the reaction (6R)-5,10-methenyltetrahydrofolate + H2O = (6R)-10-formyltetrahydrofolate + H(+). Its pathway is one-carbon metabolism; tetrahydrofolate interconversion. Its function is as follows. Catalyzes the oxidation of 5,10-methylenetetrahydrofolate to 5,10-methenyltetrahydrofolate and then the hydrolysis of 5,10-methenyltetrahydrofolate to 10-formyltetrahydrofolate. This is Bifunctional protein FolD 1 from Colwellia psychrerythraea (strain 34H / ATCC BAA-681) (Vibrio psychroerythus).